The primary structure comprises 62 residues: Conotoxin Mi5.2 (62 aa).

The first 19 residues, 1–19 (MRCVPVFIILLLLIPSASS), serve as a signal peptide directing secretion. Residues 20 to 50 (VDVQPLTRDDVPLASFLDDARRTLRSPWMTR) constitute a propeptide that is removed on maturation.

It belongs to the conotoxin T superfamily. In terms of processing, contains 2 disulfide bonds that can be either 'C1-C3, C2-C4' or 'C1-C4, C2-C3', since these disulfide connectivities have been observed for conotoxins with cysteine framework V (for examples, see AC P0DQQ7 and AC P81755). Expressed by the venom duct.

The protein localises to the secreted. The chain is Conotoxin Mi5.2 from Conus miles (Soldier cone).